A 937-amino-acid chain; its full sequence is DNA mismatch repair protein msh-2 (937 aa).

659–666 contributes to the ATP binding site; the sequence is GPNMGGKS.

The protein belongs to the DNA mismatch repair MutS family. As to quaternary structure, heterodimer of msh2 and msh6.

Its subcellular location is the nucleus. In terms of biological role, involved in post-replicative DNA-mismatch repair. Binds to mismatch-containing DNA. The chain is DNA mismatch repair protein msh-2 (msh-2) from Neurospora crassa (strain ATCC 24698 / 74-OR23-1A / CBS 708.71 / DSM 1257 / FGSC 987).